Reading from the N-terminus, the 1978-residue chain is Dedicator of cytokinesis protein 4 (1978 aa).

Residues 6–67 (EHEKYGVVIA…PSSYVHLKNA (62 aa)) form the SH3 domain. Tyrosine 167 is subject to Phosphotyrosine. Phosphothreonine is present on threonine 193. The region spanning 401–574 (RNDLYITVER…ESFWITSFLC (174 aa)) is the C2 DOCK-type domain. In terms of domain architecture, DOCKER spans 1199–1605 (KTELNKEEMY…FGIQEFPACI (407 aa)). Phosphoserine occurs at positions 1608, 1616, 1623, 1627, 1629, and 1640. 2 disordered regions span residues 1657–1738 (SQAS…IYPT) and 1751–1978 (IGDG…VSQL). Positions 1681-1712 (PSPSTSSLSSTHSASPNVTSSAPSSARASPLL) are enriched in low complexity. Residue serine 1778 is modified to Phosphoserine. The SH3-binding motif lies at 1797–1803 (PPVPPRP). Residues 1804–1818 (TQTASPARHTTSVSP) show a composition bias toward polar residues. Residues 1842–1872 (SPGLSSNSPVLSGSYSSGISSLSRCSTSETS) are compositionally biased toward low complexity. A compositionally biased stretch (polar residues) spans 1873-1882 (GFENQANEQS). Residues 1885-1895 (VPVPVPVPVPV) are compositionally biased toward pro residues. Positions 1953 to 1966 (SHLENGTRRTEPGP) are enriched in basic and acidic residues.

The protein belongs to the DOCK family. In terms of assembly, interacts with nucleotide-free Rap1; functions as a guanine nucleotide exchange factor (GEF) for Rap1. Interacts (via DOCKER domain) with RAC1; functions as a guanine nucleotide exchange factor (GEF) for RAC1. Interacts with the SH3 domain of CRK. Interacts with FASLG. Interacts with ELMO2 and EPHA2; mediates activation of RAC1 by EPHA2. Interacts with USH1C (via PDZ 1 domain). Expressed in inner ear (at protein level).

Its subcellular location is the cell membrane. It localises to the cytoplasm. It is found in the cytosol. Functions as a guanine nucleotide exchange factor (GEF) that promotes the exchange of GDP to GTP, converting inactive GDP-bound small GTPases into their active GTP-bound form. Involved in regulation of adherens junction between cells. Plays a role in cell migration. In terms of biological role, has a higher guanine nucleotide exchange factor activity compared to other isoforms. The polypeptide is Dedicator of cytokinesis protein 4 (Dock4) (Mus musculus (Mouse)).